The primary structure comprises 263 residues: Probable WRKY transcription factor 62 (263 aa).

The disordered stretch occupies residues 59 to 104; sequence DHQDDQSNNSSPQDSSPVLESSRKPLHKRGRKTSMAESSDYHRHES. The span at 64–74 shows a compositional bias: low complexity; it reads QSNNSSPQDSS. The WRKY DNA-binding region spans 104-174; sequence SSTPIYHDGF…GQHICQLHQA (71 aa).

Belongs to the WRKY group III family.

It localises to the nucleus. Functionally, transcription factor. Interacts specifically with the W box (5'-(T)TGAC[CT]-3'), a frequently occurring elicitor-responsive cis-acting element. The sequence is that of Probable WRKY transcription factor 62 (WRKY62) from Arabidopsis thaliana (Mouse-ear cress).